An 890-amino-acid polypeptide reads, in one-letter code: V-type proton ATPase subunit a, Golgi isoform (890 aa).

The residue at position 1 (M1) is an N-acetylmethionine. Over 1 to 450 (MNQEEAIFRS…DAYGIATYKE (450 aa)) the chain is Cytoplasmic. Residues 113-154 (LENVNDMVKEITDCESRARQLDESLDSLRSKLNDLLEQRQVI) are a coiled coil. Phosphoserine is present on residues S223 and S228. A coiled-coil region spans residues 297–347 (LKKVKRVIDSLNGKIVSLNTRSSELVDTLNRQIDDLQRILDTTEQTLHTEL). The chain crosses the membrane as a helical span at residues 451-469 (INAGLATVVTFPFMFAIMF). The Vacuolar portion of the chain corresponds to 470–471 (GD). Residues 472-488 (MGHGFILFLMALFLVLN) form a helical membrane-spanning segment. Residues 489-502 (ERKFGAMHRDEIFD) lie on the Cytoplasmic side of the membrane. Residues 503 to 532 (MAFTGRYVLLLMGAFSVYTGLLYNDIFSKS) form a helical membrane-spanning segment. Residues 533–580 (MTIFKSGWQWPSTFRKGESIEAKKTGVYPFGLDFAWHGTDNGLLFSNS) lie on the Vacuolar side of the membrane. The chain crosses the membrane as a helical span at residues 581–600 (YKMKLSILMGYAHMTYSFMF). The Cytoplasmic portion of the chain corresponds to 601 to 618 (SYINYRAKNSKVDIIGNF). A helical transmembrane segment spans residues 619–639 (IPGLVFMQSIFGYLSWAIVYK). The Vacuolar portion of the chain corresponds to 640–682 (WSKDWIKDDKPAPGLLNMLINMFLAPGTIDDQLYSGQAKLQVV). The helical transmembrane segment at 683-702 (LLLAALVCVPWLLLYKPLTL) threads the bilayer. At 703 to 779 (RRLNKNGGGG…DVMIHQVIHT (77 aa)) the chain is on the cytoplasmic side. A helical membrane pass occupies residues 780-804 (IEFCLNCISHTASYLRLWALSLAHA). Residues 805–828 (QLSSVLWDMTISNAFSSKNSGSPL) are Vacuolar-facing. A helical membrane pass occupies residues 829–867 (AVMKVVFLFAMWFVLTVCILVFMEGTSAMLHALRLHWVE). Residues 868 to 890 (AMSKFFEGEGYAYEPFSFRAIIE) lie on the Cytoplasmic side of the membrane.

It belongs to the V-ATPase 116 kDa subunit family. In terms of assembly, V-ATPase is a heteromultimeric enzyme composed of a peripheral catalytic V1 complex (components A to H) attached to an integral membrane V0 proton pore complex (components: a, c, c', c'', d, e, f and VOA1). In terms of processing, glycosylated.

The protein resides in the endosome membrane. Its subcellular location is the golgi apparatus membrane. Its function is as follows. Subunit of the V0 complex of vacuolar(H+)-ATPase (V-ATPase), a multisubunit enzyme composed of a peripheral complex (V1) that hydrolyzes ATP and a membrane integral complex (V0) that translocates protons. V-ATPase is responsible for acidifying and maintaining the pH of intracellular compartments. Is present only in Golgi- and endosome-residing V-ATPase complexes; enzymes containing this subunit have a 4-fold lower ratio of proton transport to ATP hydrolysis than complexes containing the vacuolar isoform and do not dissociate V1 and V0 in response to glucose depletion. This Saccharomyces cerevisiae (strain ATCC 204508 / S288c) (Baker's yeast) protein is V-type proton ATPase subunit a, Golgi isoform (STV1).